An 86-amino-acid polypeptide reads, in one-letter code: U2-sicaritoxin-Li1a (86 aa).

The N-terminal stretch at 1–20 is a signal peptide; sequence MTFKLFVVVTLVLAIYVATA. A propeptide spanning residues 21 to 33 is cleaved from the precursor; the sequence is EEAMKDDSEPAER. Cystine bridges form between C35–C53, C42–C62, C52–C71, and C64–C69.

Belongs to the neurotoxin 39 family. In terms of tissue distribution, expressed by the venom gland.

The protein resides in the secreted. Functionally, toxin active against S.frugiperda larvae. May act on sodium channels (Nav). The sequence is that of U2-sicaritoxin-Li1a from Loxosceles intermedia (Brown spider).